The following is a 401-amino-acid chain: Imidazolonepropionase (401 aa).

Histidine 66 and histidine 68 together coordinate Fe(3+). Histidine 66 and histidine 68 together coordinate Zn(2+). Positions 75, 138, and 171 each coordinate 4-imidazolone-5-propanoate. Residue tyrosine 138 participates in N-formimidoyl-L-glutamate binding. Histidine 236 provides a ligand contact to Fe(3+). A Zn(2+)-binding site is contributed by histidine 236. Glutamine 239 contributes to the 4-imidazolone-5-propanoate binding site. Fe(3+) is bound at residue aspartate 311. Aspartate 311 contributes to the Zn(2+) binding site. Positions 313 and 315 each coordinate N-formimidoyl-L-glutamate. Threonine 316 contributes to the 4-imidazolone-5-propanoate binding site.

This sequence belongs to the metallo-dependent hydrolases superfamily. HutI family. Zn(2+) serves as cofactor. Requires Fe(3+) as cofactor.

It localises to the cytoplasm. The enzyme catalyses 4-imidazolone-5-propanoate + H2O = N-formimidoyl-L-glutamate. The protein operates within amino-acid degradation; L-histidine degradation into L-glutamate; N-formimidoyl-L-glutamate from L-histidine: step 3/3. Catalyzes the hydrolytic cleavage of the carbon-nitrogen bond in imidazolone-5-propanoate to yield N-formimidoyl-L-glutamate. It is the third step in the universal histidine degradation pathway. The chain is Imidazolonepropionase from Acinetobacter baumannii (strain AB307-0294).